We begin with the raw amino-acid sequence, 556 residues long: ATP synthase subunit alpha 2 (556 aa).

Residue 177-184 (GDRATGKT) coordinates ATP. The disordered stretch occupies residues 514–556 (GGHAEDAADDMGGALDGEHASGDATSIAPTPPGGAEAGAPRKR). A compositionally biased stretch (low complexity) spans 546–556 (GGAEAGAPRKR).

The protein belongs to the ATPase alpha/beta chains family. In terms of assembly, F-type ATPases have 2 components, CF(1) - the catalytic core - and CF(0) - the membrane proton channel. CF(1) has five subunits: alpha(3), beta(3), gamma(1), delta(1), epsilon(1). CF(0) has three main subunits: a(1), b(2) and c(9-12). The alpha and beta chains form an alternating ring which encloses part of the gamma chain. CF(1) is attached to CF(0) by a central stalk formed by the gamma and epsilon chains, while a peripheral stalk is formed by the delta and b chains.

Its subcellular location is the cell inner membrane. The catalysed reaction is ATP + H2O + 4 H(+)(in) = ADP + phosphate + 5 H(+)(out). Produces ATP from ADP in the presence of a proton gradient across the membrane. The alpha chain is a regulatory subunit. The polypeptide is ATP synthase subunit alpha 2 (Burkholderia thailandensis (strain ATCC 700388 / DSM 13276 / CCUG 48851 / CIP 106301 / E264)).